The chain runs to 525 residues: GMP synthase [glutamine-hydrolyzing] (525 aa).

The 199-residue stretch at 9 to 207 (RILILDFGSQ…VSDICGCEKQ (199 aa)) folds into the Glutamine amidotransferase type-1 domain. Catalysis depends on Cys-86, which acts as the Nucleophile. Residues His-181 and Glu-183 contribute to the active site. In terms of domain architecture, GMPS ATP-PPase spans 208–400 (WTPAKIIDDA…LGLPYNMLYR (193 aa)). 235 to 241 (SGGVDSS) contributes to the ATP binding site.

In terms of assembly, homodimer.

It carries out the reaction XMP + L-glutamine + ATP + H2O = GMP + L-glutamate + AMP + diphosphate + 2 H(+). It participates in purine metabolism; GMP biosynthesis; GMP from XMP (L-Gln route): step 1/1. Catalyzes the synthesis of GMP from XMP. This is GMP synthase [glutamine-hydrolyzing] from Idiomarina loihiensis (strain ATCC BAA-735 / DSM 15497 / L2-TR).